Here is a 257-residue protein sequence, read N- to C-terminus: MNPLIIKLGGVLLDSEEALERLFSALVNYRESHQRPLVIVHGGGCVVDELMKGLNLPVKKKNGLRVTPADQIDIITGALAGTANKTLLAWAKKHQIAAVGLFLGDGDSVKVTQLDEELGHVGLAQPGSPKLINSLLENGYLPVVSSIGVTDEGQLMNVNADQAATALAATLGADLILLSDVSGILDGKGQRIAEMTAAKAEQLIEQGIITDGMIVKVNAALDAARTLGRPVDIASWRHAEQLPALFNGMPMGTRILA.

Residues 43 to 44, arginine 65, and asparagine 157 contribute to the substrate site; that span reads GG. ATP is bound by residues 180–185 and 208–210; these read DVSGIL and IIT.

Belongs to the acetylglutamate kinase family. ArgB subfamily. Homodimer.

The protein resides in the cytoplasm. It carries out the reaction N-acetyl-L-glutamate + ATP = N-acetyl-L-glutamyl 5-phosphate + ADP. It participates in amino-acid biosynthesis; L-arginine biosynthesis; N(2)-acetyl-L-ornithine from L-glutamate: step 2/4. Functionally, catalyzes the ATP-dependent phosphorylation of N-acetyl-L-glutamate. This Escherichia coli O139:H28 (strain E24377A / ETEC) protein is Acetylglutamate kinase.